A 239-amino-acid chain; its full sequence is Prolyl hydroxylase EGLN3 (239 aa).

Residues 62-73 (AGPRAGVSKRHL) form a beta(2)beta(3) 'finger-like' loop region. The required for interaction with ADRB2 stretch occupies residues 88–104 (CEAINFLLSLIDRLVLY). The 99-residue stretch at 116 to 214 (ERSKAMVACY…RYAMTVWYFD (99 aa)) folds into the Fe2OG dioxygenase domain. Fe cation contacts are provided by His135, Asp137, and His196. Arg205 provides a ligand contact to 2-oxoglutarate.

As to quaternary structure, interacts with ADRB2; the interaction hydroxylates ADRB2 facilitating its ubiquitination by the VHL-E3 ligase complex. Interacts with PAX2; the interaction targets PAX2 for destruction. Interacts with PKM; the interaction hydroxylates PKM in hypoxia. Interacts with WDR83; the interaction leads to almost complete elimination of HIF-mediated reporter activity. Interacts with BCL2 (via its BH4 domain); the interaction disrupts the BAX-BCL4 complex inhibiting the anti-apoptotic activity of BCL2. Requires Fe(2+) as cofactor. L-ascorbate serves as cofactor. Ubiquitinated by SIAH1 and/or SIAH2 in response to the unfolded protein response (UPR), leading to its degradation. Highly expressed in vascular smooth muscle. Moderately expressed in esophagus, stomach, small bowel and aorta. Low levels in tail and kidney. Expression also in pheochromocytoma cell line PC-12.

It localises to the nucleus. Its subcellular location is the cytoplasm. It carries out the reaction L-prolyl-[protein] + 2-oxoglutarate + O2 = trans-4-hydroxy-L-prolyl-[protein] + succinate + CO2. It catalyses the reaction L-prolyl-[hypoxia-inducible factor alpha subunit] + 2-oxoglutarate + O2 = trans-4-hydroxy-L-prolyl-[hypoxia-inducible factor alpha subunit] + succinate + CO2. In terms of biological role, prolyl hydroxylase that mediates hydroxylation of proline residues in target proteins, such as PKM, TELO2, ATF4 and HIF1A. Target proteins are preferentially recognized via a LXXLAP motif. Cellular oxygen sensor that catalyzes, under normoxic conditions, the post-translational formation of 4-hydroxyproline in hypoxia-inducible factor (HIF) alpha proteins. Hydroxylates a specific proline found in each of the oxygen-dependent degradation (ODD) domains (N-terminal, NODD, and C-terminal, CODD) of HIF1A. Also hydroxylates HIF2A. Has a preference for the CODD site for both HIF1A and HIF2A. Hydroxylation on the NODD site by EGLN3 appears to require prior hydroxylation on the CODD site. Hydroxylated HIFs are then targeted for proteasomal degradation via the von Hippel-Lindau ubiquitination complex. Under hypoxic conditions, the hydroxylation reaction is attenuated allowing HIFs to escape degradation resulting in their translocation to the nucleus, heterodimerization with HIF1B, and increased expression of hypoxy-inducible genes. ELGN3 is the most important isozyme in limiting physiological activation of HIFs (particularly HIF2A) in hypoxia. Also hydroxylates PKM in hypoxia, limiting glycolysis. Under normoxia, hydroxylates and regulates the stability of ADRB2. Regulator of cardiomyocyte and neuronal apoptosis. In cardiomyocytes, inhibits the anti-apoptotic effect of BCL2 by disrupting the BAX-BCL2 complex. In neurons, has a NGF-induced proapoptotic effect, probably through regulating CASP3 activity. Also essential for hypoxic regulation of neutrophilic inflammation. Plays a crucial role in DNA damage response (DDR) by hydroxylating TELO2, promoting its interaction with ATR which is required for activation of the ATR/CHK1/p53 pathway. Also mediates hydroxylation of ATF4, leading to decreased protein stability of ATF4. The chain is Prolyl hydroxylase EGLN3 (Egln3) from Rattus norvegicus (Rat).